Here is a 483-residue protein sequence, read N- to C-terminus: MSSLLPVAVYGLEVPPGDILVPAQFEFPATIRITMAAIDPTAEPETDGQGNVPTVPRSTLKLIKTTAEEDDDEYLDIDGEDSEDDEESDDEEVNGGPSDPAKSKKARREAAIKKLLEATKEESDEEMEDADAKPNGKGKKDSKGKAKASESDDEKSDEDDEEGEPNFEEFVVCTLDTERTYQQPIDITITEGEKVFFVVKGTHKVYLTGNYVLPEGQDEEDDEDEEDYSDEEYDLPHGIELESDSDYESDELDEIDGTPRIKEIDTDEEEEEAPKLVDTSKKGNKKRPAEEAENLDDLVAKDKKQAEKQKKLKNNKGEAVPAENKDVKKEGKSDKKVQFAKDLEQGPSGPAKDKLEKKEEKKDDKADLKKPSLGVKVVQGVTIDDRKLGTGRTVKSGDRVSLRYIGKLTNGKVFDANKKGAPFTVRVGKGEVIKGWEIGLIGMQVGGERRLTIPPHLAYGSRAMPGIPANSTLVFDIKLLEIK.

Disordered regions lie at residues 41-171 (TAEP…EEFV) and 208-371 (TGNY…LKKP). A compositionally biased stretch (acidic residues) spans 68–93 (EEDDDEYLDIDGEDSEDDEESDDEEV). Basic and acidic residues-rich tracts occupy residues 108–121 (REAA…ATKE) and 130–150 (ADAK…KASE). 3 stretches are compositionally biased toward acidic residues: residues 151–167 (SDDE…EPNF), 216–233 (GQDE…DEEY), and 241–256 (LESD…DEID). 3 stretches are compositionally biased toward basic and acidic residues: residues 298-309 (LVAKDKKQAEKQ), 323-344 (ENKD…KDLE), and 351-370 (AKDK…DLKK). A PPIase FKBP-type domain is found at 397-483 (GDRVSLRYIG…VFDIKLLEIK (87 aa)).

This sequence belongs to the FKBP-type PPIase family. FKBP3/4 subfamily. As to quaternary structure, binds to histones H3 and H4.

It localises to the nucleus. The enzyme catalyses [protein]-peptidylproline (omega=180) = [protein]-peptidylproline (omega=0). PPIase that acts as a histone chaperone. Histone proline isomerase that increases the rate of cis-trans isomerization at prolines on the histone H3 N-terminal tail. Proline isomerization influences H3 methylation thereby regulating gene expression. The protein is FK506-binding protein 4 (FPR4) of Chaetomium thermophilum (strain DSM 1495 / CBS 144.50 / IMI 039719) (Thermochaetoides thermophila).